Reading from the N-terminus, the 248-residue chain is Cutinase (248 aa).

The N-terminal stretch at Met1–Ala17 is a signal peptide. A propeptide spanning residues Tyr18 to Arg28 is cleaved from the precursor. The tract at residues Trp31–Gly70 is lid covering the active site of the uncomplexed enzyme. Intrachain disulfides connect Cys55–Cys91 and Cys79–Cys153. Catalysis depends on Ser164, which acts as the Nucleophile. An intrachain disulfide couples Cys212 to Cys219. The active site involves Asp216. Catalysis depends on His229, which acts as the Proton donor/acceptor.

The protein belongs to the cutinase family.

Its subcellular location is the secreted. It catalyses the reaction cutin + H2O = cutin monomers.. Weakly inhibited by n-undecyl phosphonate (C11Y4). Activity unaffected by paraoxon. Catalyzes the hydrolysis of complex carboxylic polyesters found in the cell wall of plants. Degrades cutin, a macromolecule that forms the structure of the plant cuticle. In Hypocrea jecorina (strain QM6a) (Trichoderma reesei), this protein is Cutinase.